The sequence spans 349 residues: MNGTEGNNFYVPLSNRTGLVRSPFEYPQYYLAEPWQFKLLAVYMFFLICLGLPINGLTLICTAQHKKLRQPLNFILVNLAVAGAIMVCFGFTVTFYTAINGYFALGPTGCAVEGFMATLGGEVALWSLVVLAIERYIVVCKPMGSFKFSSTHASAGIAFTWVMAMACAAPPLVGWSRYIPEGIQCSCGPDYYTLNPEYNNESYVLYMFICHFILPVTIIFFTYGRLVCTVKAAAAQQQDSASTQKAEREVTKMVILMVLGFLVAWTPYATVAAWIFFNKGAAFSAQFMAIPAFFSKTSALYNPVIYVLLNKQFRSCMLTTLFCGKNPLGDEESSTVSTSKTEVSSVSPA.

Residues 1 to 36 (MNGTEGNNFYVPLSNRTGLVRSPFEYPQYYLAEPWQ) lie on the Extracellular side of the membrane. N2 and N15 each carry an N-linked (GlcNAc...) asparagine glycan. Residues 37–61 (FKLLAVYMFFLICLGLPINGLTLIC) traverse the membrane as a helical segment. At 62–73 (TAQHKKLRQPLN) the chain is on the cytoplasmic side. Residues 74-99 (FILVNLAVAGAIMVCFGFTVTFYTAI) form a helical membrane-spanning segment. At 100–113 (NGYFALGPTGCAVE) the chain is on the extracellular side. A disulfide bridge connects residues C110 and C187. The helical transmembrane segment at 114-133 (GFMATLGGEVALWSLVVLAI) threads the bilayer. Over 134–152 (ERYIVVCKPMGSFKFSSTH) the chain is Cytoplasmic. Residues 153–176 (ASAGIAFTWVMAMACAAPPLVGWS) form a helical membrane-spanning segment. The Extracellular segment spans residues 177 to 202 (RYIPEGIQCSCGPDYYTLNPEYNNES). The chain crosses the membrane as a helical span at residues 203–230 (YVLYMFICHFILPVTIIFFTYGRLVCTV). The Cytoplasmic portion of the chain corresponds to 231–252 (KAAAAQQQDSASTQKAEREVTK). A helical membrane pass occupies residues 253–276 (MVILMVLGFLVAWTPYATVAAWIF). Over 277–284 (FNKGAAFS) the chain is Extracellular. Residues 285 to 309 (AQFMAIPAFFSKTSALYNPVIYVLL) form a helical membrane-spanning segment. K296 carries the N6-(retinylidene)lysine modification. Over 310–349 (NKQFRSCMLTTLFCGKNPLGDEESSTVSTSKTEVSSVSPA) the chain is Cytoplasmic. Residues 329-349 (GDEESSTVSTSKTEVSSVSPA) are disordered. Over residues 334–349 (STVSTSKTEVSSVSPA) the composition is skewed to low complexity.

This sequence belongs to the G-protein coupled receptor 1 family. Opsin subfamily. Post-translationally, phosphorylated on some or all of the serine and threonine residues present in the C-terminal region. The color pigments are found in the cone photoreceptor cells.

The protein resides in the membrane. Functionally, visual pigments are the light-absorbing molecules that mediate vision. They consist of an apoprotein, opsin, covalently linked to cis-retinal. This chain is Green-sensitive opsin-2, found in Carassius auratus (Goldfish).